Here is a 256-residue protein sequence, read N- to C-terminus: Ubiquinone/menaquinone biosynthesis C-methyltransferase UbiE (256 aa).

S-adenosyl-L-methionine is bound by residues T79, D100, and 128–129 (DA).

Belongs to the class I-like SAM-binding methyltransferase superfamily. MenG/UbiE family.

The catalysed reaction is a 2-demethylmenaquinol + S-adenosyl-L-methionine = a menaquinol + S-adenosyl-L-homocysteine + H(+). It catalyses the reaction a 2-methoxy-6-(all-trans-polyprenyl)benzene-1,4-diol + S-adenosyl-L-methionine = a 5-methoxy-2-methyl-3-(all-trans-polyprenyl)benzene-1,4-diol + S-adenosyl-L-homocysteine + H(+). It functions in the pathway quinol/quinone metabolism; menaquinone biosynthesis; menaquinol from 1,4-dihydroxy-2-naphthoate: step 2/2. Its pathway is cofactor biosynthesis; ubiquinone biosynthesis. Its function is as follows. Methyltransferase required for the conversion of demethylmenaquinol (DMKH2) to menaquinol (MKH2) and the conversion of 2-polyprenyl-6-methoxy-1,4-benzoquinol (DDMQH2) to 2-polyprenyl-3-methyl-6-methoxy-1,4-benzoquinol (DMQH2). In Ectopseudomonas mendocina (strain ymp) (Pseudomonas mendocina), this protein is Ubiquinone/menaquinone biosynthesis C-methyltransferase UbiE.